The sequence spans 181 residues: Oligoribonuclease (181 aa).

The region spanning 8 to 171 (LIWIDLEMTG…DDIRESVAEL (164 aa)) is the Exonuclease domain. The active site involves tyrosine 129.

It belongs to the oligoribonuclease family.

It localises to the cytoplasm. Its function is as follows. 3'-to-5' exoribonuclease specific for small oligoribonucleotides. This chain is Oligoribonuclease, found in Salmonella choleraesuis (strain SC-B67).